The sequence spans 224 residues: Small ribosomal subunit protein uS7 (224 aa).

This sequence belongs to the universal ribosomal protein uS7 family. In terms of assembly, part of the 30S ribosomal subunit.

Its function is as follows. One of the primary rRNA binding proteins, it binds directly to 16S rRNA where it nucleates assembly of the head domain of the 30S subunit. Is located at the subunit interface close to the decoding center. The sequence is that of Small ribosomal subunit protein uS7 from Caldivirga maquilingensis (strain ATCC 700844 / DSM 13496 / JCM 10307 / IC-167).